A 141-amino-acid chain; its full sequence is Large ribosomal subunit protein uL11 (141 aa).

Belongs to the universal ribosomal protein uL11 family. Part of the ribosomal stalk of the 50S ribosomal subunit. Interacts with L10 and the large rRNA to form the base of the stalk. L10 forms an elongated spine to which L12 dimers bind in a sequential fashion forming a multimeric L10(L12)X complex. Post-translationally, one or more lysine residues are methylated.

In terms of biological role, forms part of the ribosomal stalk which helps the ribosome interact with GTP-bound translation factors. The protein is Large ribosomal subunit protein uL11 of Natranaerobius thermophilus (strain ATCC BAA-1301 / DSM 18059 / JW/NM-WN-LF).